The following is an 802-amino-acid chain: MFELKKGALFVDEMKNVSIRIGKVVEEEEEVWEEAGPTPKPGILELRKWDHKLLERYEPFYAPMQDFCNLCTMGPCDLSMNKRGACGIDLKTAKARLVTIACCIGASAHTAHARHLVDHLIEEFGEDFPIDLGGDVNVEAPIIRTVVGIKPKTLGDLREALNWAEKEIVKVLHSTHIGNEESLLDYESKAMHVSMADHVGMEVADIAQIVAYNFPKAEPDTPLVDTGFGIVDKSKPTIVVVGHNVMYARPVADYLEEMGRIDDFELAGLCCTAHDMTRYNAKAKIFGPISYQLRVIRAGIPDVMISDEQCIRADLLEACKKMGIPLIATSDAAARGLPDVSDWPVEKIVDALVSGKLPGVFLPIPEKVGQVAPLVAEAIFKKHGGERKYKFFESDEALMEEINKCTQCMNCVFTCPHSLRVDQGMAHAQKTGDLSKLAQLEEQCLACMKCEQACPKNIKIINVIMRANYDRLYNKTGKTRVGRGPIQDTEIRKVGQPIVFGQIPGVIAAVGCINFPDEMKSIREILEEFLKRRYIVVTSGCHAMDIGMIKDEEGKTLYEKYPGNFDAGGLVNTGSCVANSHIAGAAIKIANIFAMRPLRGNYAEIADYVLNRVGAVGFSWGPYSHKAASIATGFNRLGVPVVVGPHGTKYRRAYIGKPWKKDKWWVYDIKSRQKVFIEPAPDSLLVAVETKEEAIVQLARLCIRPNDTNQGRQIKLTHYIELHQKYYGDLPDDWAVYVRSEADLPLKMRDQLLKVLEEQYGWKIDWDKKKIVEGPVRHFDAGFNPTIVEEVYEKYAGEKAPR.

[4Fe-4S] cluster-binding residues include Cys68, Cys71, Cys76, and Cys86. His109 lines the CO pocket. The [Ni-4Fe-4S] cluster site is built by His243, Cys271, and Cys310. 4Fe-4S ferredoxin-type domains lie at 395 to 424 (DEAL…VDQG) and 435 to 464 (SKLA…INVI). Cys405, Cys408, Cys411, Cys415, Cys444, Cys447, Cys450, and Cys454 together coordinate [4Fe-4S] cluster. [Ni-4Fe-4S] cluster-binding residues include Cys512, Cys541, and Cys576.

This sequence belongs to the Ni-containing carbon monoxide dehydrogenase family. In terms of assembly, heterotetramer of two alpha and two epsilon subunits. The ACDS complex is made up of alpha, epsilon, beta, gamma and delta subunits with a probable stoichiometry of (alpha(2)epsilon(2))(4)-beta(8)-(gamma(1)delta(1))(8). The cofactor is [4Fe-4S] cluster. Requires [Ni-4Fe-4S] cluster as cofactor.

It catalyses the reaction CO + 2 oxidized [2Fe-2S]-[ferredoxin] + H2O = 2 reduced [2Fe-2S]-[ferredoxin] + CO2 + 2 H(+). Part of the ACDS complex that catalyzes the reversible cleavage of acetyl-CoA, allowing autotrophic growth from CO(2). The alpha-epsilon subcomponent functions as a carbon monoxide dehydrogenase. This Archaeoglobus fulgidus (strain ATCC 49558 / DSM 4304 / JCM 9628 / NBRC 100126 / VC-16) protein is Acetyl-CoA decarbonylase/synthase complex subunit alpha 1.